The primary structure comprises 445 residues: uncharacterized protein (445 aa).

8 helical membrane passes run I16–I36, L52–L72, V98–C118, G168–V188, A219–I239, G243–G263, L283–S303, and A366–V386. A disordered region spans residues A417 to T445.

Belongs to the major facilitator superfamily.

Its subcellular location is the cell membrane. This is an uncharacterized protein from Mycobacterium tuberculosis (strain CDC 1551 / Oshkosh).